A 378-amino-acid chain; its full sequence is Stimulator of interferon genes protein (378 aa).

The next 2 helical transmembrane spans lie at 21–41 (AAFVLLSTCLAALWELGEPAD) and 46–66 (WLVLHLASEQLGLLFKGLCSL). Residues cysteine 88 and cysteine 91 are each lipidated (S-palmitoyl cysteine). A run of 2 helical transmembrane segments spans residues 89-109 (LGCPIRCGVLLLLSCYCYTFL) and 114-134 (GLPFAWIVALLGLSQALNILL). The interval 153–339 (FNVAHGLAWS…KHLKQEEKEE (187 aa)) is cyclic dinucleotide-binding domain (CBD). The 2',3'-cGAMP site is built by serine 162, tyrosine 167, arginine 238, and threonine 263. Residues serine 162, tyrosine 167, 238–241 (RVYT), and threonine 263 contribute to the 3',3'-c-di-GMP site. Positions 167, 238, and 263 each coordinate 2',3'-cUAMP. The tract at residues 339-378 (EVTVGTMGSSGVLESSTLDKEPQLLISGMDQPLPLRTDVF) is C-terminal tail (CTT). At serine 354 the chain carries Phosphoserine. A Phosphothreonine modification is found at threonine 355. The pLxIS motif motif lies at 362-365 (LLIS). At serine 365 the chain carries Phosphoserine; by TBK1.

The protein belongs to the STING family. As to quaternary structure, homodimer; forms a homodimer in absence of cyclic nucleotide (c-di-GMP or cGAMP). Homotetramer; in presence of cyclic nucleotide (c-di-GMP or cGAMP), forms tetramers and higher-order oligomers through side-by-side packing. Interacts (when phosphorylated) with IRF3; following activation and phosphorylation on the pLxIS motif by TBK1, recruits IRF3. Interacts with TBK1; when homodimer, leading to subsequent production of IFN-beta. In terms of processing, phosphorylation by TBK1 leads to activation and production of IFN-beta. Following cyclic nucleotide (c-di-GMP or cGAMP)-binding, activation and translocation from the endoplasmic reticulum, STING1 is phosphorylated by TBK1 at Ser-365 in the pLxIS motif. The phosphorylated pLxIS motif constitutes an IRF3-binding motif, leading to recruitment of the transcription factor IRF3 to induce type-I interferons and other cytokines. In contrast, lacks phosphorylation site at position 357, leading to reduced production of type-I interferons and other cytokines.

The protein resides in the endoplasmic reticulum membrane. It localises to the cytoplasm. Its subcellular location is the perinuclear region. It is found in the endoplasmic reticulum-Golgi intermediate compartment membrane. The protein localises to the golgi apparatus membrane. The protein resides in the cytoplasmic vesicle. It localises to the autophagosome membrane. Its subcellular location is the mitochondrion outer membrane. It is found in the cell membrane. It carries out the reaction H(+)(in) = H(+)(out). Its function is as follows. Facilitator of innate immune signaling that acts as a sensor of cytosolic DNA from bacteria and viruses and promotes low production of type I interferon (IFN-alpha and IFN-beta). Compared to other mammals, STING1-dependent type I interferon induction is strongly reduced in bats, suggesting that the cGAS-STING pathway promotes a limited inflammatory response. Innate immune response is triggered in response to non-CpG double-stranded DNA from viruses and bacteria delivered to the cytoplasm. Acts by binding cyclic dinucleotides: recognizes and binds cyclic di-GMP (c-di-GMP), a second messenger produced by bacteria, cyclic UMP-AMP (2',3'-cUAMP), and cyclic GMP-AMP (cGAMP), a messenger produced by CGAS in response to DNA virus in the cytosol. Upon binding to c-di-GMP, cUAMP or cGAMP, STING1 oligomerizes, translocates from the endoplasmic reticulum and is phosphorylated by TBK1 on the pLxIS motif, leading to recruitment and subsequent activation of the transcription factor IRF3 to induce expression of type I interferon and exert a potent anti-viral state. In addition to promote the production of type I interferons, plays a direct role in autophagy. Following cGAMP-binding, STING1 buds from the endoplasmic reticulum into COPII vesicles, which then form the endoplasmic reticulum-Golgi intermediate compartment (ERGIC). The ERGIC serves as the membrane source for WIPI2 recruitment and LC3 lipidation, leading to formation of autophagosomes that target cytosolic DNA or DNA viruses for degradation by the lysosome. Promotes autophagy by acting as a proton channel that directs proton efflux from the Golgi to facilitate MAP1LC3B/LC3B lipidation. The autophagy- and interferon-inducing activities can be uncoupled and autophagy induction is independent of TBK1 phosphorylation. This Rhinolophus ferrumequinum (Greater horseshoe bat) protein is Stimulator of interferon genes protein.